Consider the following 178-residue polypeptide: S-alkylcysteine N-acetyltransferase (178 aa).

An N-acetyltransferase domain is found at 4–163 (DIFRLATVED…IGVMMHKVLI (160 aa)).

Belongs to the acetyltransferase family.

The catalysed reaction is an S-substituted L-cysteine + acetyl-CoA = an N-acetyl-L-cysteine-S-conjugate + CoA + H(+). The enzyme catalyses S-benzyl-L-cysteine + acetyl-CoA = N-acetyl-S-benzyl-L-cysteine + CoA + H(+). It carries out the reaction S-methyl-L-cysteine + acetyl-CoA = N-acetyl-S-methyl-L-cysteine + CoA + H(+). It functions in the pathway amino-acid metabolism. Its function is as follows. Involved in a cysteine salvage pathway from S-alkylcysteine. Catalyzes the first step in this pathway, i.e. the amine acetylation of an S-alkylcysteine with a preference for S-benzyl-L-cysteine over S-methyl-L-cysteine. This pathway is likely important in the catabolism of alkylated cysteine generated by proteolysis of alkylated glutathione formed in the detoxification of a wide range of electrophiles. The sequence is that of S-alkylcysteine N-acetyltransferase from Bacillus subtilis (strain 168).